The sequence spans 488 residues: PTS system mannitol-specific EIICB component (488 aa).

Topologically, residues 1 to 26 (MRKKLAKVKVHIQSLDSLLSSMTMPI) are cytoplasmic. The PTS EIIC type-2 domain occupies 15-362 (LDSLLSSMTM…LSLTRKKQLK (348 aa)). Residues 27–48 (IGIFIAWGLLASFFIPSGWTPD) traverse the membrane as a helical segment. Over 49–52 (KNLA) the chain is Extracellular. A helical transmembrane segment spans residues 53 to 73 (LMVGIGIQYVIPTIIXFFGGK). Topologically, residues 74-147 (KIYEIRGGVI…SGFEMLVNNF (74 aa)) are cytoplasmic. The helical transmembrane segment at 148-169 (YLGFLGFALIFPSFYLSIYLIG) threads the bilayer. Topologically, residues 170-178 (YIQLGLKLL) are extracellular. The chain crosses the membrane as a helical span at residues 179–199 (VEIMQQYKLYPIAAIVIEPAK). Residues 200–289 (VLFLNNAINH…VLLKPVLILA (90 aa)) lie on the Cytoplasmic side of the membrane. Residues 290 to 309 (TIAVGVVGNGILQIFNAGTI) traverse the membrane as a helical segment. Residues 310-331 (APVSPGSVIAGFLQINKTPLDV) lie on the Extracellular side of the membrane. The helical transmembrane segment at 332–353 (AGYALALVLSAVTSLLISLLLL) threads the bilayer. Topologically, residues 354–488 (SLTRKKQLKT…IIEKIKNEKN (135 aa)) are cytoplasmic. In terms of domain architecture, PTS EIIB type-2 spans 397–488 (SQVTFVCDAG…IIEKIKNEKN (92 aa)). Cysteine 403 functions as the Phosphocysteine intermediate; for EIIB activity in the catalytic mechanism. At cysteine 403 the chain carries Phosphocysteine; by EIIA.

As to quaternary structure, homodimer.

It is found in the cell membrane. It carries out the reaction D-mannitol(out) + N(pros)-phospho-L-histidyl-[protein] = D-mannitol 1-phosphate(in) + L-histidyl-[protein]. In terms of biological role, the phosphoenolpyruvate-dependent sugar phosphotransferase system (sugar PTS), a major carbohydrate active transport system, catalyzes the phosphorylation of incoming sugar substrates concomitantly with their translocation across the cell membrane. The enzyme II CmtAB PTS system is involved in D-mannitol transport. This chain is PTS system mannitol-specific EIICB component (mtlA), found in Mycoplasma pneumoniae (strain ATCC 29342 / M129 / Subtype 1) (Mycoplasmoides pneumoniae).